A 236-amino-acid polypeptide reads, in one-letter code: tRNA (guanine-N(7)-)-methyltransferase (236 aa).

Positions 68, 93, 120, and 143 each coordinate S-adenosyl-L-methionine. Asp143 is a catalytic residue. Substrate contacts are provided by residues Lys147, Asp179, and 212–215 (TKFE).

Belongs to the class I-like SAM-binding methyltransferase superfamily. TrmB family.

It carries out the reaction guanosine(46) in tRNA + S-adenosyl-L-methionine = N(7)-methylguanosine(46) in tRNA + S-adenosyl-L-homocysteine. Its pathway is tRNA modification; N(7)-methylguanine-tRNA biosynthesis. In terms of biological role, catalyzes the formation of N(7)-methylguanine at position 46 (m7G46) in tRNA. This chain is tRNA (guanine-N(7)-)-methyltransferase, found in Nitrosococcus oceani (strain ATCC 19707 / BCRC 17464 / JCM 30415 / NCIMB 11848 / C-107).